We begin with the raw amino-acid sequence, 280 residues long: Energy-coupling factor transporter ATP-binding protein EcfA1 (280 aa).

The ABC transporter domain occupies 6–244 (IECKNVVYKY…VPLMKNIGLD (239 aa)). 43–50 (GHNGSGKS) provides a ligand contact to ATP.

This sequence belongs to the ABC transporter superfamily. Energy-coupling factor EcfA family. In terms of assembly, forms a stable energy-coupling factor (ECF) transporter complex composed of 2 membrane-embedded substrate-binding proteins (S component), 2 ATP-binding proteins (A component) and 2 transmembrane proteins (T component).

The protein localises to the cell membrane. In terms of biological role, ATP-binding (A) component of a common energy-coupling factor (ECF) ABC-transporter complex. Unlike classic ABC transporters this ECF transporter provides the energy necessary to transport a number of different substrates. The chain is Energy-coupling factor transporter ATP-binding protein EcfA1 from Clostridium novyi (strain NT).